A 61-amino-acid polypeptide reads, in one-letter code: Small ribosomal subunit protein uS14 (61 aa).

Zn(2+) contacts are provided by C24, C27, C40, and C43.

Belongs to the universal ribosomal protein uS14 family. Zinc-binding uS14 subfamily. As to quaternary structure, part of the 30S ribosomal subunit. Contacts proteins S3 and S10. The cofactor is Zn(2+).

Functionally, binds 16S rRNA, required for the assembly of 30S particles and may also be responsible for determining the conformation of the 16S rRNA at the A site. This chain is Small ribosomal subunit protein uS14, found in Borreliella burgdorferi (strain ATCC 35210 / DSM 4680 / CIP 102532 / B31) (Borrelia burgdorferi).